Consider the following 582-residue polypeptide: 2-succinyl-5-enolpyruvyl-6-hydroxy-3-cyclohexene-1-carboxylate synthase (582 aa).

It belongs to the TPP enzyme family. MenD subfamily. Homodimer. Requires Mg(2+) as cofactor. It depends on Mn(2+) as a cofactor. The cofactor is thiamine diphosphate.

It carries out the reaction isochorismate + 2-oxoglutarate + H(+) = 5-enolpyruvoyl-6-hydroxy-2-succinyl-cyclohex-3-ene-1-carboxylate + CO2. It functions in the pathway quinol/quinone metabolism; 1,4-dihydroxy-2-naphthoate biosynthesis; 1,4-dihydroxy-2-naphthoate from chorismate: step 2/7. Its pathway is cofactor biosynthesis; phylloquinone biosynthesis. Catalyzes the thiamine diphosphate-dependent decarboxylation of 2-oxoglutarate and the subsequent addition of the resulting succinic semialdehyde-thiamine pyrophosphate anion to isochorismate to yield 2-succinyl-5-enolpyruvyl-6-hydroxy-3-cyclohexene-1-carboxylate (SEPHCHC). This is 2-succinyl-5-enolpyruvyl-6-hydroxy-3-cyclohexene-1-carboxylate synthase from Trichodesmium erythraeum (strain IMS101).